The chain runs to 476 residues: H2.0-like homeobox protein (476 aa).

Disordered regions lie at residues 120–169, 328–401, and 413–476; these read QHLP…PSSK, WRHS…HQTT, and TASS…LAGL. Composition is skewed to low complexity over residues 123–134 and 158–168; these read PQQSPTQQQQPQ and HHSGSAPAPSS. Residues 273–332 constitute a DNA-binding region (homeobox); that stretch reads RSWSRAVFSNLQRKGLEKRFEIQKYVTKPDRKQLAAMLGLTDAQVKVWFQNRRMKWRHSK. Composition is skewed to basic and acidic residues over residues 331-346 and 355-368; these read SKEA…EAGE and EGER…RSEG. The span at 369–379 shows a compositional bias: acidic residues; the sequence is EAESESSDSES. The segment covering 386–397 has biased composition (basic and acidic residues); it reads DTERTEGTERSL. Over residues 413 to 434 the composition is skewed to low complexity; it reads TASSSTSGSSFSFSSTSSLGSG. Polar residues-rich tracts occupy residues 435–446 and 455–467; these read NTHVGSASSLGG and HQPS…QSPE.

This sequence belongs to the H2.0 homeobox family. In terms of tissue distribution, expressed in Th1 cells, CD8-positive T-cells, B-cells and NK cells.

Its subcellular location is the nucleus. Transcription factor required for TBX21/T-bet-dependent maturation of Th1 cells as well as maintenance of Th1-specific gene expression. Involved in embryogenesis and hematopoiesis. This chain is H2.0-like homeobox protein (Hlx), found in Mus musculus (Mouse).